The primary structure comprises 683 residues: Long-chain fatty acid transport protein 3 (683 aa).

A helical membrane pass occupies residues 3-23 (ALLLLPLLLLLPLLLLKLHLW). The segment covering 119–128 (GGDSGEGSAG) has biased composition (gly residues). A disordered region spans residues 119-145 (GGDSGEGSAGEGERAAPGAGDAAAGSG). The segment covering 133 to 145 (AAPGAGDAAAGSG) has biased composition (low complexity). ATP is bound by residues 288 to 292 (TSGTT), H331, T428, D528, R543, and K635.

Belongs to the ATP-dependent AMP-binding enzyme family. As to expression, expressed in bronchial and bronchiolar epithelial cells (at protein level).

The protein resides in the mitochondrion membrane. It carries out the reaction a fatty acid(in) = a fatty acid(out). It catalyses the reaction a long-chain fatty acid + ATP + CoA = a long-chain fatty acyl-CoA + AMP + diphosphate. The enzyme catalyses hexadecanoate + ATP + CoA = hexadecanoyl-CoA + AMP + diphosphate. The catalysed reaction is (9Z)-octadecenoate + ATP + CoA = (9Z)-octadecenoyl-CoA + AMP + diphosphate. It carries out the reaction (9Z,12Z)-octadecadienoate + ATP + CoA = (9Z,12Z)-octadecadienoyl-CoA + AMP + diphosphate. It catalyses the reaction (5Z,8Z,11Z,14Z)-eicosatetraenoate + ATP + CoA = (5Z,8Z,11Z,14Z)-eicosatetraenoyl-CoA + AMP + diphosphate. The enzyme catalyses a very long-chain fatty acid + ATP + CoA = a very long-chain fatty acyl-CoA + AMP + diphosphate. The catalysed reaction is tetracosanoate + ATP + CoA = tetracosanoyl-CoA + AMP + diphosphate. In terms of biological role, mainly functions as an acyl-CoA ligase catalyzing the ATP-dependent formation of fatty acyl-CoA using LCFA and very-long-chain fatty acids (VLCFA) as substrates. Can mediate the levels of long-chain fatty acids (LCFA) in the cell by facilitating their transport across membranes. This chain is Long-chain fatty acid transport protein 3, found in Homo sapiens (Human).